Consider the following 184-residue polypeptide: Dynactin subunit 6 (184 aa).

It belongs to the dynactin subunits 5/6 family. Dynactin subunit 6 subfamily. As to quaternary structure, subunit of dynactin, a multiprotein complex part of a tripartite complex with dynein and a adapter, such as BICDL1, BICD2 or HOOK3. The dynactin complex is built around ACTR1A/ACTB filament and consists of an actin-related filament composed of a shoulder domain, a pointed end and a barbed end.

The protein localises to the cytoplasm. It is found in the cytoskeleton. In terms of biological role, part of the dynactin complex that activates the molecular motor dynein for ultra-processive transport along microtubules. This chain is Dynactin subunit 6 (dctn6), found in Nematostella vectensis (Starlet sea anemone).